Consider the following 392-residue polypeptide: Adenosine 3'-phospho 5'-phosphosulfate transporter 2 (392 aa).

The segment at 11 to 35 (NINGSASGQQAPTSNSPTLTRKSSS) is disordered. 10 consecutive transmembrane segments (helical) span residues 62–82 (CAGVFILYILYGYLQELIFTV), 87–107 (PFGWFLTLVQFGYYIGFGLVE), 136–156 (LVLAALTLGTMGLSNSSLGYL), 159–179 (PTQVIFKCCKLIPVLVGSILI), 185–205 (GPLDFAAASCMCIGLAWFTLA), 212–232 (NFNLLGVAMISGALLCDAAIG), 249–269 (VVFYSYGLGFVYLFVIMLVTG), 286–306 (FGYGFLFSLSGYLGIQFVLAL), 314–334 (IAATVTTARKAVTIAFSFVLF), and 338–358 (FTVQYLWSGLIVVLGIYLNVY).

This sequence belongs to the nucleotide-sugar transporter family. SLC35B subfamily.

The protein localises to the golgi apparatus membrane. Its function is as follows. Mediates the transport of adenosine 3'-phospho 5'-phosphosulfate (PAPS), from cytosol into Golgi. PAPS is a universal sulfuryl donor for sulfation events that take place in the Golgi. Essential for viability. Involved in glycosaminoglycan synthesis and the subsequent signaling. May be involved in hh and dpp signaling by controlling the sulfation of heparan sulfate (HS). This Drosophila pseudoobscura pseudoobscura (Fruit fly) protein is Adenosine 3'-phospho 5'-phosphosulfate transporter 2.